The sequence spans 42 residues: Photosystem II reaction center protein J (42 aa).

The helical transmembrane segment at 10–30 threads the bilayer; sequence IPLWLVATVAGLAVIALLGVF.

Belongs to the PsbJ family. In terms of assembly, PSII is composed of 1 copy each of membrane proteins PsbA, PsbB, PsbC, PsbD, PsbE, PsbF, PsbH, PsbI, PsbJ, PsbK, PsbL, PsbM, PsbT, PsbX, PsbY, PsbZ, Psb30/Ycf12, at least 3 peripheral proteins of the oxygen-evolving complex and a large number of cofactors. It forms dimeric complexes.

It is found in the plastid. It localises to the chloroplast thylakoid membrane. In terms of biological role, one of the components of the core complex of photosystem II (PSII). PSII is a light-driven water:plastoquinone oxidoreductase that uses light energy to abstract electrons from H(2)O, generating O(2) and a proton gradient subsequently used for ATP formation. It consists of a core antenna complex that captures photons, and an electron transfer chain that converts photonic excitation into a charge separation. The chain is Photosystem II reaction center protein J from Chlorokybus atmophyticus (Soil alga).